A 569-amino-acid chain; its full sequence is Cationic amino acid transporter 5 (569 aa).

Topologically, residues 1–67 (MEGEERGYWR…KQSEHEMKRC (67 aa)) are cytoplasmic. A helical membrane pass occupies residues 68–88 (LTWWDLVWFGFGSVIGAGIFV). The Extracellular segment spans residues 89 to 97 (LTGQEAHEQ). Residues 98–118 (AGPAIVLSYVVSGLSAMLSVF) traverse the membrane as a helical segment. The Cytoplasmic segment spans residues 119–143 (CYTEFAVEIPVAGGSFAYLRIELGD). The chain crosses the membrane as a helical span at residues 144–164 (FAAFITAGNILLESIVGTAAV). Topologically, residues 165–192 (ARAWTSYFATLLNRSPNALRIKTDLSSG) are extracellular. A helical membrane pass occupies residues 193 to 213 (FNLLDPIAVVVIAASATIASI). Residues 214 to 222 (STRKTSLLN) are Cytoplasmic-facing. Residues 223-243 (WIASAINTLVIFFVIIAGFIH) form a helical membrane-spanning segment. Residues 244–251 (ADTSNLTP) are Extracellular-facing. Residues 252-272 (FLPFGPEGVFRAAAVVYFAYG) traverse the membrane as a helical segment. At 273–290 (GFDSIATMAEETKNPSRD) the chain is on the cytoplasmic side. Residues 291-311 (IPIGLLGSMSIITVIYCLMAL) form a helical membrane-spanning segment. Residues 312-341 (SLSMMQKYTDIDPNAAYSVAFQSVGMKWGK) are Extracellular-facing. A helical membrane pass occupies residues 342–362 (YLVALGALKGMTTVLLVGALG). The Cytoplasmic segment spans residues 363 to 389 (QARYVTHIARTHMIPPIFALVHPKTGT). The chain crosses the membrane as a helical span at residues 390-410 (PINANLLVAIPSALIAFFSGL). Position 411 (aspartate 411) is a topological domain, extracellular. Residues 412 to 432 (VLASLLSISTLFIFTMMPIAL) form a helical membrane-spanning segment. Topologically, residues 433-450 (LVRRYYVRQDTPRVHLIK) are cytoplasmic. The chain crosses the membrane as a helical span at residues 451-471 (LITCLLFVVVSSMGTSAYWGM). Topologically, residues 472–477 (QRKGSW) are extracellular. A helical membrane pass occupies residues 478–498 (IGYTVTVPFWFLGTLGIVFFV). The Cytoplasmic portion of the chain corresponds to 499–505 (PQQRTPK). The chain crosses the membrane as a helical span at residues 506 to 526 (VWGVPLVPWLPCLSIATNIFL). Topologically, residues 527-537 (MGSLGAMAFVR) are extracellular. Residues 538–558 (FGVCTLAMLLYYFLLGLHATF) form a helical membrane-spanning segment. Residues 559-569 (DMAHQQIVPRT) lie on the Cytoplasmic side of the membrane.

Belongs to the amino acid-polyamine-organocation (APC) superfamily. Cationic amino acid transporter (CAT) (TC 2.A.3.3) family. Expressed in roots, stems, flowers, seeds, and leaves. Mostly present in leaf rims and cotyledons of developing seedlings.

The protein resides in the cell membrane. High-affinity permease involved in the transport of the cationic amino acids (e.g. arginine, and, to a lower extent, citrulline and glutamate). Transport mostly basic amino acids, and, to a lower extent neutral and acidic amino acids. The chain is Cationic amino acid transporter 5 (CAT5) from Arabidopsis thaliana (Mouse-ear cress).